The primary structure comprises 387 residues: MKNVVIVDCIRTPMGRSKNGVFRHTRAEDLSAHLMKGLLERNPNVDPNQIEDIYWGCVQQTLEQGFNIARNASLLAGLPKSIAATTVNRLCGSSMQALHDASRAIMVGDADICIIGGVEHMGHVPMNHGVDFHSGLSKNVAKASGMMGLTAEMLGKMHGISREQQDAFAFASHQKAHRATIEGHFDSEILPMEGHDENGALTLVKHDEVIRPETTLEGLAALRPAFDPANGTVTAGSSSALSDGASAMLIMSEEKANELGLTIRAKIRSMAVSGCDPAIMGYGPVPATKKALKRAGLSIDDIDLFELNEAFAAQSLPCIKDLGLFDVMEEKINLNGGAIALGHPLGCSGSRIATTLINNMERTGAKLGVATMCIGLGQGIATVFERP.

Cys-91 functions as the Acyl-thioester intermediate in the catalytic mechanism. Catalysis depends on proton acceptor residues His-343 and Cys-373.

It belongs to the thiolase-like superfamily. Thiolase family. In terms of assembly, heterotetramer of two alpha chains (FadB) and two beta chains (FadA).

It is found in the cytoplasm. The catalysed reaction is an acyl-CoA + acetyl-CoA = a 3-oxoacyl-CoA + CoA. It participates in lipid metabolism; fatty acid beta-oxidation. Catalyzes the final step of fatty acid oxidation in which acetyl-CoA is released and the CoA ester of a fatty acid two carbons shorter is formed. This chain is 3-ketoacyl-CoA thiolase, found in Aliivibrio salmonicida (strain LFI1238) (Vibrio salmonicida (strain LFI1238)).